A 514-amino-acid polypeptide reads, in one-letter code: 2,3-bisphosphoglycerate-independent phosphoglycerate mutase (514 aa).

Residues aspartate 14 and serine 64 each coordinate Mn(2+). Serine 64 acts as the Phosphoserine intermediate in catalysis. Substrate contacts are provided by residues histidine 125, 155-156, arginine 187, arginine 193, 263-266, and lysine 336; these read RD and RADR. Mn(2+)-binding residues include aspartate 403, histidine 407, aspartate 444, histidine 445, and histidine 463.

This sequence belongs to the BPG-independent phosphoglycerate mutase family. In terms of assembly, monomer. Requires Mn(2+) as cofactor.

It carries out the reaction (2R)-2-phosphoglycerate = (2R)-3-phosphoglycerate. Its pathway is carbohydrate degradation; glycolysis; pyruvate from D-glyceraldehyde 3-phosphate: step 3/5. In terms of biological role, catalyzes the interconversion of 2-phosphoglycerate and 3-phosphoglycerate. The sequence is that of 2,3-bisphosphoglycerate-independent phosphoglycerate mutase from Shigella flexneri.